The chain runs to 390 residues: 1-acyl-sn-glycerol-3-phosphate acyltransferase 2 (390 aa).

The helical transmembrane segment at 2 to 22 (AMAAAVIVPLGILFFISGLVV) threads the bilayer. The short motif at 91–96 (HRSDID) is the HXXXXD motif element. A run of 2 helical transmembrane segments spans residues 305 to 325 (LAVV…FLHW) and 333 to 353 (KGIA…QILI). Positions 358–390 (SERSTPAKVAPAKPKDNHQSGPSSQTEVEEKQK) are disordered.

This sequence belongs to the 1-acyl-sn-glycerol-3-phosphate acyltransferase family.

The protein localises to the endoplasmic reticulum membrane. The catalysed reaction is a 1-acyl-sn-glycero-3-phosphate + an acyl-CoA = a 1,2-diacyl-sn-glycero-3-phosphate + CoA. The protein operates within phospholipid metabolism; CDP-diacylglycerol biosynthesis; CDP-diacylglycerol from sn-glycerol 3-phosphate: step 2/3. Converts lysophosphatidic acid (LPA) into phosphatidic acid by incorporating acyl moiety at the 2 position. The polypeptide is 1-acyl-sn-glycerol-3-phosphate acyltransferase 2 (LPAT2) (Brassica napus (Rape)).